The following is a 293-amino-acid chain: Chorion protein S36 (293 aa).

The N-terminal stretch at 1–20 (MQLGLWFGLFAVAAAPLVSA) is a signal peptide. Residues 235 to 253 (QSYGQPQAYNQPQAYSQPQ) show a composition bias toward polar residues. The segment at 235-293 (QSYGQPQAYNQPQAYSQPQSYGNSGSSGAGNSGPSSDSYAAGAETPLYASPAPYGSPSY) is disordered.

It belongs to the chorion protein S36 family.

It is found in the secreted. Functionally, chorion membrane (egg shell) protein; protects the egg from the environment. The protein is Chorion protein S36 (Cp36) of Drosophila virilis (Fruit fly).